The sequence spans 281 residues: 2-dehydro-3-deoxyphosphooctonate aldolase (281 aa).

This sequence belongs to the KdsA family.

It localises to the cytoplasm. The enzyme catalyses D-arabinose 5-phosphate + phosphoenolpyruvate + H2O = 3-deoxy-alpha-D-manno-2-octulosonate-8-phosphate + phosphate. The protein operates within carbohydrate biosynthesis; 3-deoxy-D-manno-octulosonate biosynthesis; 3-deoxy-D-manno-octulosonate from D-ribulose 5-phosphate: step 2/3. It participates in bacterial outer membrane biogenesis; lipopolysaccharide biosynthesis. The protein is 2-dehydro-3-deoxyphosphooctonate aldolase of Pseudomonas syringae pv. tomato (strain ATCC BAA-871 / DC3000).